The primary structure comprises 328 residues: Sulfate adenylyltransferase subunit 2 (328 aa).

The disordered stretch occupies residues 305–328 (ERQGRVIDRDSTGSMERKKAEGYF).

The protein belongs to the PAPS reductase family. CysD subfamily. Heterodimer composed of CysD, the smaller subunit, and CysN.

The enzyme catalyses sulfate + ATP + H(+) = adenosine 5'-phosphosulfate + diphosphate. It participates in sulfur metabolism; hydrogen sulfide biosynthesis; sulfite from sulfate: step 1/3. With CysN forms the ATP sulfurylase (ATPS) that catalyzes the adenylation of sulfate producing adenosine 5'-phosphosulfate (APS) and diphosphate, the first enzymatic step in sulfur assimilation pathway. APS synthesis involves the formation of a high-energy phosphoric-sulfuric acid anhydride bond driven by GTP hydrolysis by CysN coupled to ATP hydrolysis by CysD. In Rhodopseudomonas palustris (strain BisB18), this protein is Sulfate adenylyltransferase subunit 2.